The primary structure comprises 267 residues: tRNA pseudouridine synthase A (267 aa).

Asp-54 functions as the Nucleophile in the catalytic mechanism. Tyr-112 is a binding site for substrate.

The protein belongs to the tRNA pseudouridine synthase TruA family. Homodimer.

The catalysed reaction is uridine(38/39/40) in tRNA = pseudouridine(38/39/40) in tRNA. Functionally, formation of pseudouridine at positions 38, 39 and 40 in the anticodon stem and loop of transfer RNAs. The chain is tRNA pseudouridine synthase A from Bordetella avium (strain 197N).